The sequence spans 571 residues: MRRRSRMLLCFAFLWVLGIAYYMYSGGGSALAGGAGGGAGRKEDWNEIDPIKKKDLHHSNGEEKAQSMETLPPGKVRWPDFNQEAYVGGTMVRSGQDPYARNKFNQVESDKLRMDRAIPDTRHDQCQRKQWRVDLPATSVVITFHNEARSALLRTVVSVLKKSPPHLIKEIILVDDYSNDPEDGALLGKIEKVRVLRNDRREGLMRSRVRGADAAQAKVLTFLDSHCECNEHWLEPLLERVAEDRTRVVSPIIDVINMDNFQYVGASADLKGGFDWNLVFKWDYMTPEQRRSRQGNPVAPIKTPMIAGGLFVMDKFYFEELGKYDMMMDVWGGENLEISFRVWQCGGSLEIIPCSRVGHVFRKQHPYTFPGGSGTVFARNTRRAAEVWMDEYKNFYYAAVPSARNVPYGNIQSRLELRKKLSCKPFKWYLENVYPELRVPDHQDIAFGALQQGTNCLDTLGHFADGVVGVYECHNAGGNQEWALTKEKSVKHMDLCLTVVDRAPGSLIKLQGCRENDSRQKWEQIEGNSKLRHVGSNLCLDSRTAKSGGLSVEVCGPALSQQWKFTLNLQQ.

At 1-6 (MRRRSR) the chain is on the cytoplasmic side. Residues 7-24 (MLLCFAFLWVLGIAYYMY) form a helical; Signal-anchor for type II membrane protein membrane-spanning segment. Topologically, residues 25–571 (SGGGSALAGG…QWKFTLNLQQ (547 aa)) are lumenal. A glycan (O-linked (Xyl...) (chondroitin sulfate) serine) is linked at Ser-29. Over residues 53–66 (KKDLHHSNGEEKAQ) the composition is skewed to basic and acidic residues. Residues 53-74 (KKDLHHSNGEEKAQSMETLPPG) are disordered. 4 disulfides stabilise this stretch: Cys-126-Cys-354, Cys-345-Cys-423, Cys-456-Cys-473, and Cys-496-Cys-513. The interval 135-240 (LPATSVVITF…EHWLEPLLER (106 aa)) is catalytic subdomain A. Residues Thr-143, Asp-176, and Arg-201 each contribute to the substrate site. Position 224 (Asp-224) interacts with Mn(2+). Ser-225 contributes to the substrate binding site. Residue His-226 coordinates Mn(2+). A catalytic subdomain B region spans residues 300 to 362 (PIKTPMIAGG…PCSRVGHVFR (63 aa)). Trp-331 contacts substrate. Position 359 (His-359) interacts with Mn(2+). Positions 362, 365, and 367 each coordinate substrate. The region spanning 443–566 (QDIAFGALQQ…PALSQQWKFT (124 aa)) is the Ricin B-type lectin domain. Residue Ser-536 is modified to Phosphoserine. Cysteines 539 and 555 form a disulfide.

Belongs to the glycosyltransferase 2 family. GalNAc-T subfamily. Requires Mn(2+) as cofactor. Detected in urine (at protein level). Widely expressed.

It is found in the golgi apparatus. It localises to the golgi stack membrane. The protein localises to the secreted. It carries out the reaction L-seryl-[protein] + UDP-N-acetyl-alpha-D-galactosamine = a 3-O-[N-acetyl-alpha-D-galactosaminyl]-L-seryl-[protein] + UDP + H(+). The enzyme catalyses L-threonyl-[protein] + UDP-N-acetyl-alpha-D-galactosamine = a 3-O-[N-acetyl-alpha-D-galactosaminyl]-L-threonyl-[protein] + UDP + H(+). The protein operates within protein modification; protein glycosylation. Catalyzes the initial reaction in O-linked oligosaccharide biosynthesis, the transfer of an N-acetyl-D-galactosamine residue to a serine or threonine residue on the protein receptor. Has a broad spectrum of substrates for peptides such as EA2, Muc5AC, Muc1a, Muc1b. Probably involved in O-linked glycosylation of the immunoglobulin A1 (IgA1) hinge region. Involved in O-linked glycosylation of APOC-III, ANGPTL3 and PLTP. It participates in the regulation of HDL-C metabolism. In Homo sapiens (Human), this protein is Polypeptide N-acetylgalactosaminyltransferase 2 (GALNT2).